The sequence spans 192 residues: dCTP deaminase, dUMP-forming (192 aa).

Residues 101–106, D119, 127–129, Q148, Y162, and Q174 each bind dCTP; these read KSSLGR and TLE. E129 serves as the catalytic Proton donor/acceptor. A disordered region spans residues 162-192; the sequence is YGSGADGSRYQGQRGPTASRSHVKFHRTHVE. Positions 171–181 are enriched in polar residues; sequence YQGQRGPTASR. A compositionally biased stretch (basic residues) spans 182-192; sequence SHVKFHRTHVE.

This sequence belongs to the dCTP deaminase family. In terms of assembly, homotrimer.

The catalysed reaction is dCTP + 2 H2O = dUMP + NH4(+) + diphosphate. It participates in pyrimidine metabolism; dUMP biosynthesis; dUMP from dCTP: step 1/1. In terms of biological role, bifunctional enzyme that catalyzes both the deamination of dCTP to dUTP and the hydrolysis of dUTP to dUMP without releasing the toxic dUTP intermediate. This chain is dCTP deaminase, dUMP-forming, found in Beutenbergia cavernae (strain ATCC BAA-8 / DSM 12333 / CCUG 43141 / JCM 11478 / NBRC 16432 / NCIMB 13614 / HKI 0122).